Consider the following 406-residue polypeptide: Paracaspase (406 aa).

A caspase-like region spans residues 193–374 (IGNSKYSQHR…TERKNNNIST (182 aa)). Active-site residues include His266 and Cys311.

The protein belongs to the peptidase C14B family.

Functionally, not required for DIF-induced autophagic cell death and necrotic cell death. This Dictyostelium discoideum (Social amoeba) protein is Paracaspase (pcp).